We begin with the raw amino-acid sequence, 581 residues long: MITTLYKEPASFAHEFSNINLLWASLFIEELVRNGISDFCIAPGSRSTPLTLAADQHTEAHTHVHFDERGLGFLALGLSLFSHKPVVIITTSGTAVANLYPAVIEAKLSAIPLIILSADRPVELIDCGANQAIDQYRIFSHYPVFFAQIPSATTHIKPNYLLTTINQGLQQQRQTPAAIHFNIAFSEPLYPQTATLNYQGYLQSLKQWLIDKQPFSQYFQNKDSFQAASNTQLRDKKVLVIAGRVTGINQAQAIAEFAALNNYPLLADLQSALTGNANNLHYYDLLLVNKQFTENLQQADIIVQFGGKLISKRLSQFIEGFAGEYLLVDPGNTRIDPAHSLRKRFVCSATQWIKSLQNKIPDIDKHWSQVLQQQNNYITKQIISPFLDNNLISEISVISALDKLLPADNPVFIGNSMPVRLSDMFFRQNAALPFSNRGASGIDGLLATASGIAKSCASITTLLIGDTSFLHDLNSLALLKQLQGPFVIIVFNNDGGAIFNLLPVPTQQKQDYYQLPHGLTFADSCRQFSIDYYQPESLDQFVGDYQKSLQNRLSLIEICVKNDQTYNHLEYIKEQIKYATF.

It belongs to the TPP enzyme family. MenD subfamily. Homodimer. Mg(2+) is required as a cofactor. The cofactor is Mn(2+). It depends on thiamine diphosphate as a cofactor.

It catalyses the reaction isochorismate + 2-oxoglutarate + H(+) = 5-enolpyruvoyl-6-hydroxy-2-succinyl-cyclohex-3-ene-1-carboxylate + CO2. It participates in quinol/quinone metabolism; 1,4-dihydroxy-2-naphthoate biosynthesis; 1,4-dihydroxy-2-naphthoate from chorismate: step 2/7. The protein operates within quinol/quinone metabolism; menaquinone biosynthesis. Its function is as follows. Catalyzes the thiamine diphosphate-dependent decarboxylation of 2-oxoglutarate and the subsequent addition of the resulting succinic semialdehyde-thiamine pyrophosphate anion to isochorismate to yield 2-succinyl-5-enolpyruvyl-6-hydroxy-3-cyclohexene-1-carboxylate (SEPHCHC). The chain is 2-succinyl-5-enolpyruvyl-6-hydroxy-3-cyclohexene-1-carboxylate synthase from Psychromonas ingrahamii (strain DSM 17664 / CCUG 51855 / 37).